The following is a 447-amino-acid chain: Serine/threonine-protein phosphatase 2A 55 kDa regulatory subunit B gamma isoform (447 aa).

WD repeat units lie at residues T22 to P61, E87 to E128, G171 to N209, D220 to K260, E279 to E317, E334 to L375, and D410 to M446.

This sequence belongs to the phosphatase 2A regulatory subunit B family. In terms of assembly, PP2A consists of a common heterodimeric core enzyme, composed of a 36 kDa catalytic subunit (subunit C) and a 65 kDa constant regulatory subunit (PR65 or subunit A), that associates with a variety of regulatory subunits. Proteins that associate with the core dimer include three families of regulatory subunits B (the R2/B/PR55/B55, R3/B''/PR72/PR130/PR59 and R5/B'/B56 families), the 48 kDa variable regulatory subunit, viral proteins, and cell signaling molecules. Interacts with IER5.

The B regulatory subunit might modulate substrate selectivity and catalytic activity, and might also direct the localization of the catalytic enzyme to a particular subcellular compartment. The protein is Serine/threonine-protein phosphatase 2A 55 kDa regulatory subunit B gamma isoform (PPP2R2C) of Homo sapiens (Human).